Reading from the N-terminus, the 402-residue chain is Arginine deiminase (402 aa).

The Amidino-cysteine intermediate role is filled by C392.

Belongs to the arginine deiminase family.

It localises to the cytoplasm. The catalysed reaction is L-arginine + H2O = L-citrulline + NH4(+). Its pathway is amino-acid degradation; L-arginine degradation via ADI pathway; carbamoyl phosphate from L-arginine: step 1/2. This chain is Arginine deiminase (arcA), found in Mycobacterium bovis (strain ATCC BAA-935 / AF2122/97).